We begin with the raw amino-acid sequence, 206 residues long: MPTVALYNTNGEQVGELALKDEIFGVEVHEPVLHDAVVMHLANRRLGTHDTKTRSEVRGGGRKPWRQKGTGRARHGSIRSPLWRGGGIIFGPHPRDYSYSLPRKVRRLALKSALSAKVNSGDILVLDELKLDQPKTKEMARILNNLKVDDALLVTAEKDEAVERSARNIPNIKPVQAALLNVYDILAYDKLVMTRDAVARVEEVFA.

Positions Thr-48–Gly-59 are enriched in basic and acidic residues. Positions Thr-48 to Ser-77 are disordered. Basic residues predominate over residues Gly-60 to Ser-77.

Belongs to the universal ribosomal protein uL4 family. In terms of assembly, part of the 50S ribosomal subunit.

One of the primary rRNA binding proteins, this protein initially binds near the 5'-end of the 23S rRNA. It is important during the early stages of 50S assembly. It makes multiple contacts with different domains of the 23S rRNA in the assembled 50S subunit and ribosome. Its function is as follows. Forms part of the polypeptide exit tunnel. This chain is Large ribosomal subunit protein uL4, found in Pelotomaculum thermopropionicum (strain DSM 13744 / JCM 10971 / SI).